The following is a 473-amino-acid chain: MSPQTETKASVGFKAGVKDYKLTYYTPQYQTKDTDILAAFRVTPQPGVPPEEAGAAVAAESSTGTWTTVWTDGLTSLDRYKGRCYHIEPVAGEENQFIAYVAYPLDLFEEGSVTNMFTSIVGNVFGFKALRALRLEDLRIPISYVKTFQGPPHGIQVERDKLNKYGRPLLGCTIKPKLGLSAKNYGRAVYECLRGGLDFTKDDENVNSQPFMRWRDRFLFCAEALFKAQAETGEIKGHYLNATAGTCEEMIKRAVFARELGVPIIMHDYLTGGFTANTSLAHYCRDNGLLLHIHRAMHAVIDRQKNHGMHFRVLAKALRLSGGDHVHSGTVVGKLEGEREITLGFVDLLRDDFVEKDRSRGIYFTQDWVSLPGVLPVASGGIHVWHMPALTEIFGDDSVLQFGGGTLGHPWGNAPGAVANRVALEACVQARNEGRDLAREGNEIIREASKWSPELAAACEVWKAIKFEFPAMD.

The propeptide occupies 1-2; the sequence is MS. Pro-3 bears the N-acetylproline mark. Position 14 is an N6,N6,N6-trimethyllysine (Lys-14). The substrate site is built by Asn-123 and Thr-173. Residue Lys-175 is the Proton acceptor of the active site. Residue Lys-177 coordinates substrate. Residues Lys-201, Asp-203, and Glu-204 each contribute to the Mg(2+) site. Position 201 is an N6-carboxylysine (Lys-201). His-294 (proton acceptor) is an active-site residue. Residues Arg-295, His-327, and Ser-379 each coordinate substrate.

Belongs to the RuBisCO large chain family. Type I subfamily. In terms of assembly, heterohexadecamer of 8 large chains and 8 small chains; disulfide-linked. The disulfide link is formed within the large subunit homodimers. The cofactor is Mg(2+). The disulfide bond which can form in the large chain dimeric partners within the hexadecamer appears to be associated with oxidative stress and protein turnover.

It localises to the plastid. It is found in the chloroplast. The enzyme catalyses 2 (2R)-3-phosphoglycerate + 2 H(+) = D-ribulose 1,5-bisphosphate + CO2 + H2O. It catalyses the reaction D-ribulose 1,5-bisphosphate + O2 = 2-phosphoglycolate + (2R)-3-phosphoglycerate + 2 H(+). Functionally, ruBisCO catalyzes two reactions: the carboxylation of D-ribulose 1,5-bisphosphate, the primary event in carbon dioxide fixation, as well as the oxidative fragmentation of the pentose substrate in the photorespiration process. Both reactions occur simultaneously and in competition at the same active site. The polypeptide is Ribulose bisphosphate carboxylase large chain (Cajanus cajan (Pigeon pea)).